Reading from the N-terminus, the 227-residue chain is Phosphoribosylaminoimidazole-succinocarboxamide synthase (227 aa).

The protein belongs to the SAICAR synthetase family.

It carries out the reaction 5-amino-1-(5-phospho-D-ribosyl)imidazole-4-carboxylate + L-aspartate + ATP = (2S)-2-[5-amino-1-(5-phospho-beta-D-ribosyl)imidazole-4-carboxamido]succinate + ADP + phosphate + 2 H(+). It participates in purine metabolism; IMP biosynthesis via de novo pathway; 5-amino-1-(5-phospho-D-ribosyl)imidazole-4-carboxamide from 5-amino-1-(5-phospho-D-ribosyl)imidazole-4-carboxylate: step 1/2. The chain is Phosphoribosylaminoimidazole-succinocarboxamide synthase from Clostridium tetani (strain Massachusetts / E88).